Here is a 219-residue protein sequence, read N- to C-terminus: Octanoyltransferase (219 aa).

The region spanning 31–206 is the BPL/LPL catalytic domain; sequence DEDVDQIWLV…ELVELLGYDQ (176 aa). Residues 70–77, 137–139, and 150–152 contribute to the substrate site; these read RGGQVTYH, SLG, and GLA. Cys-168 serves as the catalytic Acyl-thioester intermediate.

The protein belongs to the LipB family.

It is found in the cytoplasm. The catalysed reaction is octanoyl-[ACP] + L-lysyl-[protein] = N(6)-octanoyl-L-lysyl-[protein] + holo-[ACP] + H(+). Its pathway is protein modification; protein lipoylation via endogenous pathway; protein N(6)-(lipoyl)lysine from octanoyl-[acyl-carrier-protein]: step 1/2. Its function is as follows. Catalyzes the transfer of endogenously produced octanoic acid from octanoyl-acyl-carrier-protein onto the lipoyl domains of lipoate-dependent enzymes. Lipoyl-ACP can also act as a substrate although octanoyl-ACP is likely to be the physiological substrate. The sequence is that of Octanoyltransferase from Vibrio atlanticus (strain LGP32) (Vibrio splendidus (strain Mel32)).